The sequence spans 327 residues: Sphingomyelin synthase-related 2 (327 aa).

The next 5 helical transmembrane spans lie at leucine 54–valine 74, alanine 99–phenylalanine 119, valine 131–valine 151, leucine 192–phenylalanine 212, and leucine 220–leucine 240. The active site involves histidine 201. Over alanine 241–glutamate 327 the chain is Cytoplasmic. Catalysis depends on residues histidine 244 and aspartate 248.

Belongs to the sphingomyelin synthase family.

It localises to the membrane. This chain is Sphingomyelin synthase-related 2, found in Caenorhabditis elegans.